Reading from the N-terminus, the 90-residue chain is Small ribosomal subunit protein bS18 (90 aa).

Belongs to the bacterial ribosomal protein bS18 family. In terms of assembly, part of the 30S ribosomal subunit. Forms a tight heterodimer with protein bS6.

In terms of biological role, binds as a heterodimer with protein bS6 to the central domain of the 16S rRNA, where it helps stabilize the platform of the 30S subunit. This Porphyromonas gingivalis (strain ATCC 33277 / DSM 20709 / CIP 103683 / JCM 12257 / NCTC 11834 / 2561) protein is Small ribosomal subunit protein bS18.